We begin with the raw amino-acid sequence, 300 residues long: Ribosomal protein L11 methyltransferase (300 aa).

S-adenosyl-L-methionine contacts are provided by threonine 147, glycine 168, aspartate 190, and asparagine 236.

Belongs to the methyltransferase superfamily. PrmA family.

It is found in the cytoplasm. The catalysed reaction is L-lysyl-[protein] + 3 S-adenosyl-L-methionine = N(6),N(6),N(6)-trimethyl-L-lysyl-[protein] + 3 S-adenosyl-L-homocysteine + 3 H(+). In terms of biological role, methylates ribosomal protein L11. The protein is Ribosomal protein L11 methyltransferase of Leptospira borgpetersenii serovar Hardjo-bovis (strain JB197).